The chain runs to 278 residues: TIMELESS-interacting protein (278 aa).

The disordered stretch occupies residues 1-59 (MLEQEENGLFEIPDYEHVEDETFPPFPPPASPERDPADAEPEEGSGSGVPVPPKRTVKR). The tract at residues 64-140 (LDATRLTSER…KEVQTCLKRI (77 aa)) is interaction with TIMELESS. Disordered regions lie at residues 155-197 (NDEV…EEQQ) and 216-278 (LSNS…TNLD). A phosphoserine mark is found at Ser191 and Ser219. Positions 226–239 (VTVEENSTGEDQEE) are enriched in acidic residues. Thr233 carries the post-translational modification Phosphothreonine. Basic and acidic residues predominate over residues 259–278 (THEEEQCKAEETQLDHTNLD).

It belongs to the CSM3 family. Interacts with MCM6 and MCM7. Interacts with TIMELESS (via N-terminus), which impairs TIMELESS self-association. Interacts with RPA2 and PRDX2. As to expression, expressed in brain.

It localises to the cytoplasm. Its subcellular location is the nucleus. Its function is as follows. Plays an important role in the control of DNA replication and the maintenance of replication fork stability. Important for cell survival after DNA damage or replication stress. May be specifically required for the ATR-CHEK1 pathway in the replication checkpoint induced by hydroxyurea or ultraviolet light. Forms a complex with TIMELESS and this complex regulates DNA replication processes under both normal and stress conditions, stabilizes replication forks and influences both CHEK1 phosphorylation and the intra-S phase checkpoint in response to genotoxic stress. The protein is TIMELESS-interacting protein (Tipin) of Mus musculus (Mouse).